A 507-amino-acid chain; its full sequence is Transmembrane protein 184 homolog DDB_G0276041 (507 aa).

The next 7 helical transmembrane spans lie at isoleucine 13–leucine 33, isoleucine 50–phenylalanine 70, alanine 88–leucine 108, leucine 141–leucine 161, leucine 179–phenylalanine 199, valine 222–leucine 242, and phenylalanine 260–serine 280. Residues asparagine 360, asparagine 375, asparagine 470, asparagine 473, asparagine 477, and asparagine 498 are each glycosylated (N-linked (GlcNAc...) asparagine). A disordered region spans residues asparagine 448–serine 500. Residues serine 451 to serine 500 show a composition bias toward low complexity.

Belongs to the TMEM184 family.

It localises to the cell membrane. Functionally, probable transporter. The sequence is that of Transmembrane protein 184 homolog DDB_G0276041 (tmem184B) from Dictyostelium discoideum (Social amoeba).